A 436-amino-acid chain; its full sequence is ATP-dependent protease ATPase subunit HslU (436 aa).

ATP contacts are provided by residues Ile18, 60 to 65, Asp249, Glu314, and Arg386; that span reads GVGKTE.

The protein belongs to the ClpX chaperone family. HslU subfamily. A double ring-shaped homohexamer of HslV is capped on each side by a ring-shaped HslU homohexamer. The assembly of the HslU/HslV complex is dependent on binding of ATP.

Its subcellular location is the cytoplasm. Its function is as follows. ATPase subunit of a proteasome-like degradation complex; this subunit has chaperone activity. The binding of ATP and its subsequent hydrolysis by HslU are essential for unfolding of protein substrates subsequently hydrolyzed by HslV. HslU recognizes the N-terminal part of its protein substrates and unfolds these before they are guided to HslV for hydrolysis. The protein is ATP-dependent protease ATPase subunit HslU of Chelativorans sp. (strain BNC1).